The chain runs to 403 residues: MYLTKEEEKILDGEYGEVLRRCMNLLVSLGDIYGADKLIPISSAQISGVSYKTIKDIGLEFLEDFAKEDVKVKVYATLNPAGMDLDIWRELGIDEKFAKKQLRIIEAFKKMEVEISCTCTPYLTGNLPRFGEHISWAESSAVSFANSVLGAKTNREGGPSALAAAIIGKTPYYGYHLDENRKTTHIIELDGQLISNFKYGESFYGALGYLVGKIVKNGIPYFENLYKLNPNNDNLKSLGAAMAASGGIALYHAKNLTAECRVKEVVNDKIEKISIGVEEIKEAYEKLNTTNEEPDLICIGCPHCSLMEIKKIAELLKNKKLNADLWVCCSLHIKAIADRMGYTKIIEKAGGKVVKDTCMVVSPIEDLGYKRVATNSGKAAVYLPSFCKSEVIFGDIEELLKGR.

Residues G48, V49, S50, N79, and P80 each coordinate (R)-5-phosphomevalonate. C119 contacts [4Fe-4S] cluster. 2 residues coordinate (R)-5-phosphomevalonate: E138 and S139. C301 and C358 together coordinate [4Fe-4S] cluster. K378 provides a ligand contact to (R)-5-phosphomevalonate.

Belongs to the AcnX type II large subunit family. In terms of assembly, heterodimer composed of a large subunit (PMDh-L) and a small subunit (PMDh-S). It depends on [4Fe-4S] cluster as a cofactor.

The catalysed reaction is (R)-5-phosphomevalonate = (2E)-3-methyl-5-phosphooxypent-2-enoate + H2O. It functions in the pathway isoprenoid biosynthesis; isopentenyl diphosphate biosynthesis via mevalonate pathway. Functionally, component of a hydro-lyase that catalyzes the dehydration of mevalonate 5-phosphate (MVA5P) to form trans-anhydromevalonate 5-phosphate (tAHMP). Involved in the archaeal mevalonate (MVA) pathway, which provides fundamental precursors for isoprenoid biosynthesis, such as isopentenyl diphosphate (IPP) and dimethylallyl diphosphate (DMAPP). The polypeptide is Phosphomevalonate dehydratase large subunit (Methanocaldococcus jannaschii (strain ATCC 43067 / DSM 2661 / JAL-1 / JCM 10045 / NBRC 100440) (Methanococcus jannaschii)).